A 299-amino-acid polypeptide reads, in one-letter code: Sodium/potassium-transporting ATPase subunit beta-2 (299 aa).

Residues 1 to 36 (MAALTQKKTCSQMMEEWKEFMWNPRTREFMGRTGSS) are Cytoplasmic-facing. A helical; Signal-anchor for type II membrane protein transmembrane segment spans residues 37–57 (WALILLFYVVFYAFLTAVFSL). Residues 58–299 (SLWVMLQTID…VIFTMKIDRL (242 aa)) are Extracellular-facing. N-linked (GlcNAc...) asparagine glycans are attached at residues Asn101 and Asn119. Intrachain disulfides connect Cys130/Cys152 and Cys162/Cys178. 4 N-linked (GlcNAc...) asparagine glycosylation sites follow: Asn199, Asn226, Asn247, and Asn259. Cys206 and Cys270 are joined by a disulfide.

Belongs to the X(+)/potassium ATPases subunit beta family. The sodium/potassium-transporting ATPase is composed of a catalytic alpha subunit, an auxiliary non-catalytic beta subunit and an additional regulatory subunit. In terms of tissue distribution, expressed at a high level in bladder epithelial cells and eye and at a trace level in kidney; it is not detectable in significant amounts in the stomach, colon and small intestine.

It is found in the cell membrane. Functionally, this is the non-catalytic component of the active enzyme, which catalyzes the hydrolysis of ATP coupled with the exchange of Na(+) and K(+) ions across the plasma membrane. The exact function of this glycoprotein is not known. Some specific sequence of the beta subunit can modulate the activation of the Na,K-pump by extracellular potassium ions. This is Sodium/potassium-transporting ATPase subunit beta-2 from Rhinella marina (Cane toad).